An 89-amino-acid chain; its full sequence is UPF0147 protein TV0625 (89 aa).

Belongs to the UPF0147 family.

This is UPF0147 protein TV0625 from Thermoplasma volcanium (strain ATCC 51530 / DSM 4299 / JCM 9571 / NBRC 15438 / GSS1).